The primary structure comprises 345 residues: MNYKLFSPYTIKDVTLKNRIVMSPMCMYSSENEDGQVTNFHLVHYGTRAAGQVGLVMIEATAVLPGGRISNKDLGIWDDSLIEGLHKTTTFIHDNGAKAAIQLAHAGRKAELETDALAPSAVPFNETMKTPVEMSKHQIKDTVLAFQQAAIRSKQAGFDVIEIHGAHGYLINEFLSPLSNKRTDEYGGSPENRYRFLREIIDSINEVWNGPLFVRISANDYHPDGLTVQDYVQYTKWMKEQGVDLIDCSSGAVVPARIDVYPGYQVQYAKHIKEHANIATGAVGLITTGAQAEQILTNNEADLIFIGRELLRNPYFPRIAANELGFELEEPYQYERAPGKISTNK.

23–26 (SPMC) contributes to the FMN binding site. Tyr-28 is a substrate binding site. Residues Ala-60 and Gln-102 each contribute to the FMN site. 164–167 (HGAH) lines the substrate pocket. FMN contacts are provided by residues Arg-215 and 307–308 (GR).

Belongs to the NADH:flavin oxidoreductase/NADH oxidase family. NamA subfamily. In terms of assembly, homotetramer. It depends on FMN as a cofactor.

It carries out the reaction A + NADPH + H(+) = AH2 + NADP(+). In terms of biological role, catalyzes the reduction of the double bond of an array of alpha,beta-unsaturated aldehydes and ketones. It also reduces the nitro group of nitroester and nitroaromatic compounds. It could have a role in detoxification processes. The sequence is that of NADPH dehydrogenase from Bacillus cereus (strain AH820).